A 300-amino-acid chain; its full sequence is Acetylglutamate kinase (300 aa).

Substrate-binding positions include 73 to 74, Arg95, and Asn197; that span reads GG.

The protein belongs to the acetylglutamate kinase family. ArgB subfamily.

The protein localises to the cytoplasm. It catalyses the reaction N-acetyl-L-glutamate + ATP = N-acetyl-L-glutamyl 5-phosphate + ADP. It participates in amino-acid biosynthesis; L-arginine biosynthesis; N(2)-acetyl-L-ornithine from L-glutamate: step 2/4. Catalyzes the ATP-dependent phosphorylation of N-acetyl-L-glutamate. The polypeptide is Acetylglutamate kinase (Bordetella petrii (strain ATCC BAA-461 / DSM 12804 / CCUG 43448)).